The sequence spans 186 residues: ATP synthase subunit b, chloroplastic (186 aa).

Residues 26–44 form a helical membrane-spanning segment; the sequence is ILETNLINLGVVIGTLLYF.

The protein belongs to the ATPase B chain family. F-type ATPases have 2 components, F(1) - the catalytic core - and F(0) - the membrane proton channel. F(1) has five subunits: alpha(3), beta(3), gamma(1), delta(1), epsilon(1). F(0) has four main subunits: a(1), b(1), b'(1) and c(10-14). The alpha and beta chains form an alternating ring which encloses part of the gamma chain. F(1) is attached to F(0) by a central stalk formed by the gamma and epsilon chains, while a peripheral stalk is formed by the delta, b and b' chains.

It localises to the plastid. The protein resides in the chloroplast thylakoid membrane. Its function is as follows. F(1)F(0) ATP synthase produces ATP from ADP in the presence of a proton or sodium gradient. F-type ATPases consist of two structural domains, F(1) containing the extramembraneous catalytic core and F(0) containing the membrane proton channel, linked together by a central stalk and a peripheral stalk. During catalysis, ATP synthesis in the catalytic domain of F(1) is coupled via a rotary mechanism of the central stalk subunits to proton translocation. Component of the F(0) channel, it forms part of the peripheral stalk, linking F(1) to F(0). The polypeptide is ATP synthase subunit b, chloroplastic (Chara vulgaris (Common stonewort)).